Consider the following 144-residue polypeptide: Probable nucleoside diphosphate kinase 5 (144 aa).

ATP is bound by residues Lys-3, Phe-51, Arg-79, Thr-85, Arg-99, and Asn-109. The active-site Pros-phosphohistidine intermediate is the His-112.

The protein belongs to the NDK family.

The enzyme catalyses a 2'-deoxyribonucleoside 5'-diphosphate + ATP = a 2'-deoxyribonucleoside 5'-triphosphate + ADP. It catalyses the reaction a ribonucleoside 5'-diphosphate + ATP = a ribonucleoside 5'-triphosphate + ADP. Functionally, involved in the synthesis of nucleoside triphosphates other than ATP. The ATP gamma phosphate is transferred to the NDP beta phosphate via a ping-pong mechanism, using a phosphorylated active-site intermediate. The sequence is that of Probable nucleoside diphosphate kinase 5 from Arabidopsis thaliana (Mouse-ear cress).